A 595-amino-acid polypeptide reads, in one-letter code: MSKKKEEAKALRTPIVAVLGHVDHGKTTLLDRIRKSKVVAKEAGGITQHIGATEVPLDVIKQICKDIWKVEVKIPGLLFIDTPGHKAFTNLRRRGGALADLAILIVDINEGFKPQTEEALSILRTFKTPFVVAANKIDRIPGWQSHEDTPFMKSYAMQEDFAKQNLENRLYNLIAELYQRGFSAERFDRISDFTRTVAVVPISALKGEGIPELLLILVGLAQRYLEKNLRLHIEGKGRGTVLEVKEERGLGVTCDAILYDGTLKVGDRIAIAGKDEVIVTNVKAILKPPPVREMRVESKFQSVKSVTAAAGIKIVAPNLENVLAGSEFEVVESEEDIKKFEERVRKEYEEIAIRTDEEGVVLKTDTLGSLEALINELRQEGIPIKKAEVGDVDKRDVVDASANKDELNKVVLAFNVKLLPGVEEEAKKYGVRIFSHEIIYTLIESFVKWREEERLARERQKVEALIKPGKIKLLKEFIFRRSKPAIVGVRVLAGELRRGVDLIKPDGTKVGAVRTMQKEGKNVAIASAGDELAIAIEDVTIGRQLEGDEELYVDVPERHAKVIERDLLDSLDEETKRAFKEFLEIKRKDNPFWGK.

Residues 11 to 225 form the tr-type G domain; that stretch reads LRTPIVAVLG…ILVGLAQRYL (215 aa). The G1 stretch occupies residues 20–27; that stretch reads GHVDHGKT. Residue 20-27 coordinates GTP; it reads GHVDHGKT. The G2 stretch occupies residues 45 to 49; it reads GITQH. Positions 81–84 are G3; that stretch reads DTPG. Residues 81–85 and 135–138 each bind GTP; these read DTPGH and NKID. The G4 stretch occupies residues 135-138; it reads NKID. Positions 203 to 205 are G5; it reads SAL.

The protein belongs to the TRAFAC class translation factor GTPase superfamily. Classic translation factor GTPase family. IF-2 subfamily.

In terms of biological role, function in general translation initiation by promoting the binding of the formylmethionine-tRNA to ribosomes. Seems to function along with eIF-2. The protein is Probable translation initiation factor IF-2 (infB) of Archaeoglobus fulgidus (strain ATCC 49558 / DSM 4304 / JCM 9628 / NBRC 100126 / VC-16).